The primary structure comprises 318 residues: Trans-prenyltransferase (318 aa).

A helical transmembrane segment spans residues 1–21; it reads MLHLIYISIIVVLIIILISYT. Isopentenyl diphosphate-binding residues include Lys85, Arg88, and His122. The Mg(2+) site is built by Asp129 and Asp135. Residue Arg140 coordinates dimethylallyl diphosphate. Isopentenyl diphosphate is bound at residue Arg141. Dimethylallyl diphosphate-binding residues include Lys216, Thr217, and Gln254.

The protein belongs to the FPP/GGPP synthase family. Asfivirus trans-prenyltransferase subfamily. Requires Mg(2+) as cofactor.

The protein localises to the host endoplasmic reticulum. It localises to the host membrane. The enzyme catalyses isopentenyl diphosphate + dimethylallyl diphosphate = (2E)-geranyl diphosphate + diphosphate. It catalyses the reaction isopentenyl diphosphate + (2E)-geranyl diphosphate = (2E,6E)-farnesyl diphosphate + diphosphate. The catalysed reaction is isopentenyl diphosphate + (2E,6E)-farnesyl diphosphate = (2E,6E,10E)-geranylgeranyl diphosphate + diphosphate. It carries out the reaction isopentenyl diphosphate + (2E,6E,10E)-geranylgeranyl diphosphate = (2E,6E,10E,14E)-geranylfarnesyl diphosphate + diphosphate. It participates in isoprenoid biosynthesis; farnesyl diphosphate biosynthesis; farnesyl diphosphate from geranyl diphosphate and isopentenyl diphosphate: step 1/1. Its pathway is isoprenoid biosynthesis; geranyl diphosphate biosynthesis; geranyl diphosphate from dimethylallyl diphosphate and isopentenyl diphosphate: step 1/1. It functions in the pathway isoprenoid biosynthesis; geranylgeranyl diphosphate biosynthesis; geranylgeranyl diphosphate from farnesyl diphosphate and isopentenyl diphosphate: step 1/1. Functionally, trans-prenyltransferase that catalyzes the sequential condensation of isopentenyl diphosphate (IPP) with different allylic diphosphates, such as dimethylallyl diphosphate (DMAPP), geranyl diphosphate (GPP), farnesyl diphosphate (FPP) and geranylgeranyl diphosphate (GGPP), farnesyl diphosphate being the best allylic substrate. The protein is Trans-prenyltransferase of African swine fever virus (strain Badajoz 1971 Vero-adapted) (Ba71V).